A 122-amino-acid chain; its full sequence is Piercer of microtubule wall 2 protein (122 aa).

Residues 1–23 (MARETDCDLDKKTSLTSDAEMRP) show a composition bias toward basic and acidic residues. Disordered stretches follow at residues 1-26 (MARETDCDLDKKTSLTSDAEMRPEPP) and 99-122 (QNNSLNVGPDRTRTIDSPNYQHTL). A compositionally biased stretch (polar residues) spans 113–122 (IDSPNYQHTL).

It belongs to the PIERCE2 family. As to quaternary structure, microtubule inner protein component of sperm flagellar doublet microtubules. Interacts with CFAP53, ODAD1 and ODAD3; the interactions link the outer dynein arms docking complex (ODA-DC) to the internal microtubule inner proteins (MIP) in cilium axoneme.

It is found in the cytoplasm. It localises to the cytoskeleton. The protein resides in the cilium axoneme. The protein localises to the flagellum axoneme. Its function is as follows. Microtubule inner protein involved in the attachment of outer dynein arms (ODAs) to dynein-decorated doublet microtubules (DMTs) in cilia axoneme, which is required for motile cilia beating. In Mus musculus (Mouse), this protein is Piercer of microtubule wall 2 protein.